The sequence spans 751 residues: Serine/threonine-protein kinase-like protein CCR4 (751 aa).

A signal peptide spans 1 to 31 (MALTISISCFSSYFVSLLLLVLSSFSFVCFS). Topologically, residues 32–366 (LSTVSISHIS…NKTWSRRNIA (335 aa)) are extracellular. N-linked (GlcNAc...) asparagine glycans are attached at residues Asn42, Asn51, Asn98, Asn243, Asn254, Asn283, and Asn357. A helical transmembrane segment spans residues 367–387 (FLVVGCVGTFSLLLVISFLIF). At 388-751 (KSHCRCRVHD…TETVSRSNTY (364 aa)) the chain is on the cytoplasmic side. One can recognise a Protein kinase domain in the interval 443-733 (FSVRFHLGIG…EVVSKLESAL (291 aa)). ATP contacts are provided by residues 449–457 (LGIGSFGSV) and Lys471. Asp579 serves as the catalytic Proton acceptor.

This sequence belongs to the protein kinase superfamily. Ser/Thr protein kinase family. Homodimer. Expressed in roots, leaves, especially in trichomes, shoot apical meristems (SAM), and, to a lower extent, in floral buds.

The protein localises to the membrane. The catalysed reaction is L-seryl-[protein] + ATP = O-phospho-L-seryl-[protein] + ADP + H(+). The enzyme catalyses L-threonyl-[protein] + ATP = O-phospho-L-threonyl-[protein] + ADP + H(+). The sequence is that of Serine/threonine-protein kinase-like protein CCR4 (CCR4) from Arabidopsis thaliana (Mouse-ear cress).